The primary structure comprises 199 residues: MANRGPSYGLSREVQEKIEQKYDADLENKLVDWIILQCAEDIEHPPPGRTHFQKWLMDGTVLCKLINSLYPPGQEPIPKISESKMAFKQMEQISQFLKAAEVYGVRTTDIFQTVDLWEGKDMAAVQRTLMALGSVAVTKDDGCYRGEPSWFHRKAQQNRRGFSEEQLRQGQNVIGLQMGSNKGASQAGMTGYGMPRQIM.

One can recognise a Calponin-homology (CH) domain in the interval 24–136; that stretch reads ADLENKLVDW…RTLMALGSVA (113 aa). S163 is modified (phosphoserine). A Calponin-like repeat occupies 174 to 199; sequence IGLQMGSNKGASQAGMTGYGMPRQIM. The span at 178-188 shows a compositional bias: polar residues; sequence MGSNKGASQAG. The interval 178–199 is disordered; it reads MGSNKGASQAGMTGYGMPRQIM.

It belongs to the calponin family. In terms of tissue distribution, abundant and ubiquitous expression in neurons.

The protein is Transgelin-3 (Tagln3) of Rattus norvegicus (Rat).